Here is a 104-residue protein sequence, read N- to C-terminus: MTNRLALSGTVCRAPLRKVSPSGIPHCQFVLEHRSVQEEAGFHRQAWCQMPVIVSGHENQAITHSITVGSRITVQGFISCHKAKNGLSKMVLHAEQIELIDSGD.

Residues 1 to 101 (MTNRLALSGT…LHAEQIELID (101 aa)) form the SSB domain.

The protein belongs to the PriB family. Homodimer. Interacts with PriA and DnaT. Component of the replication restart primosome. Primosome assembly occurs via a 'hand-off' mechanism. PriA binds to replication forks, subsequently PriB then DnaT bind; DnaT then displaces ssDNA to generate the helicase loading substrate.

In terms of biological role, involved in the restart of stalled replication forks, which reloads the replicative helicase on sites other than the origin of replication; the PriA-PriB pathway is the major replication restart pathway. During primosome assembly it facilitates complex formation between PriA and DnaT on DNA; stabilizes PriA on DNA. Stimulates the DNA unwinding activity of PriA helicase. In Salmonella agona (strain SL483), this protein is Replication restart protein PriB.